Here is a 347-residue protein sequence, read N- to C-terminus: 3-methyl-2-oxobutanoate hydroxymethyltransferase 1, mitochondrial (347 aa).

Residues 1-48 (MASSLTRNCSRFSKAISVRFMSNLPENTVYGGPKPQNPNQRVTLTHLR) constitute a mitochondrion transit peptide. Asp83 and Asp122 together coordinate Mg(2+). 3-methyl-2-oxobutanoate is bound by residues 83-84 (DS), Asp122, and Lys152. Glu154 contacts Mg(2+). Glu222 functions as the Proton acceptor in the catalytic mechanism.

The protein belongs to the PanB family. Requires Mg(2+) as cofactor.

It is found in the mitochondrion. It carries out the reaction 3-methyl-2-oxobutanoate + (6R)-5,10-methylene-5,6,7,8-tetrahydrofolate + H2O = 2-dehydropantoate + (6S)-5,6,7,8-tetrahydrofolate. The protein operates within cofactor biosynthesis; (R)-pantothenate biosynthesis; (R)-pantoate from 3-methyl-2-oxobutanoate: step 1/2. Its function is as follows. Catalyzes the reversible reaction in which hydroxymethyl group from 5,10-methylenetetrahydrofolate is transferred onto alpha-ketoisovalerate to form ketopantoate. The chain is 3-methyl-2-oxobutanoate hydroxymethyltransferase 1, mitochondrial (KPHMT1) from Arabidopsis thaliana (Mouse-ear cress).